A 468-amino-acid chain; its full sequence is UDP-N-acetylmuramate--L-alanine ligase (468 aa).

An ATP-binding site is contributed by 112–118; that stretch reads GTHGKTT.

Belongs to the MurCDEF family.

It is found in the cytoplasm. It catalyses the reaction UDP-N-acetyl-alpha-D-muramate + L-alanine + ATP = UDP-N-acetyl-alpha-D-muramoyl-L-alanine + ADP + phosphate + H(+). Its pathway is cell wall biogenesis; peptidoglycan biosynthesis. Functionally, cell wall formation. The chain is UDP-N-acetylmuramate--L-alanine ligase from Bordetella bronchiseptica (strain ATCC BAA-588 / NCTC 13252 / RB50) (Alcaligenes bronchisepticus).